A 141-amino-acid chain; its full sequence is Methylglyoxal synthase (141 aa).

An MGS-like domain is found at 1–141 (MNIALIAHDK…PKLQKNKSDK (141 aa)). Substrate contacts are provided by residues His-8, Lys-12, and 34 to 37 (TGTT). The active-site Proton donor/acceptor is the Asp-60. His-87 serves as a coordination point for substrate.

This sequence belongs to the methylglyoxal synthase family.

The enzyme catalyses dihydroxyacetone phosphate = methylglyoxal + phosphate. Its function is as follows. Catalyzes the formation of methylglyoxal from dihydroxyacetone phosphate. This Caldicellulosiruptor bescii (strain ATCC BAA-1888 / DSM 6725 / KCTC 15123 / Z-1320) (Anaerocellum thermophilum) protein is Methylglyoxal synthase.